The chain runs to 310 residues: UPF0282 protein PF0593 (310 aa).

It belongs to the UPF0282 family.

The polypeptide is UPF0282 protein PF0593 (Pyrococcus furiosus (strain ATCC 43587 / DSM 3638 / JCM 8422 / Vc1)).